The chain runs to 218 residues: Adenylate kinase (218 aa).

10–15 lines the ATP pocket; sequence GAGKGT. The tract at residues 30 to 59 is NMP; the sequence is STGDMLRAAIQAQTPLGLEAKKVMDDGKLV. Residues threonine 31, arginine 36, 57-59, 85-88, and glutamine 92 each bind AMP; these read KLV and GFPR. Positions 122–159 are LID; that stretch reads GRRVHLASGRTYHVIFNPPKKEGVDDITGEPLIQREDD. ATP contacts are provided by residues arginine 123 and 132–133; that span reads TY. Positions 156 and 167 each coordinate AMP. Residue glycine 203 participates in ATP binding.

This sequence belongs to the adenylate kinase family. Monomer.

It localises to the cytoplasm. The catalysed reaction is AMP + ATP = 2 ADP. It participates in purine metabolism; AMP biosynthesis via salvage pathway; AMP from ADP: step 1/1. Its function is as follows. Catalyzes the reversible transfer of the terminal phosphate group between ATP and AMP. Plays an important role in cellular energy homeostasis and in adenine nucleotide metabolism. This Prosthecochloris aestuarii (strain DSM 271 / SK 413) protein is Adenylate kinase.